Reading from the N-terminus, the 317-residue chain is Transaldolase (317 aa).

Lysine 132 acts as the Schiff-base intermediate with substrate in catalysis.

It belongs to the transaldolase family. Type 1 subfamily. As to quaternary structure, homodimer.

Its subcellular location is the cytoplasm. It carries out the reaction D-sedoheptulose 7-phosphate + D-glyceraldehyde 3-phosphate = D-erythrose 4-phosphate + beta-D-fructose 6-phosphate. Its pathway is carbohydrate degradation; pentose phosphate pathway; D-glyceraldehyde 3-phosphate and beta-D-fructose 6-phosphate from D-ribose 5-phosphate and D-xylulose 5-phosphate (non-oxidative stage): step 2/3. Transaldolase is important for the balance of metabolites in the pentose-phosphate pathway. The polypeptide is Transaldolase (Pseudoalteromonas atlantica (strain T6c / ATCC BAA-1087)).